The primary structure comprises 928 residues: Nuclear pore complex-interacting protein family member B12 (928 aa).

A helical membrane pass occupies residues V73–S93. 2 disordered regions span residues R242–T452 and E663–S928. Residues Q252–L263 are compositionally biased toward polar residues. The segment covering P349–P359 has biased composition (pro residues). Basic and acidic residues-rich tracts occupy residues D406 to R416, D698 to R708, D740 to R750, and D782 to R792.

Belongs to the NPIP family.

Its subcellular location is the membrane. The protein is Nuclear pore complex-interacting protein family member B12 of Homo sapiens (Human).